Consider the following 292-residue polypeptide: Shikimate dehydrogenase (NADP(+)) (292 aa).

Residues 25-27 (SKS) and Thr-72 each bind shikimate. The active-site Proton acceptor is the Lys-76. Shikimate contacts are provided by Asn-97 and Asp-113. NADP(+) contacts are provided by residues 137–141 (GAGGA), 161–166 (NRTQSK), and Met-230. Tyr-232 contacts shikimate. Residue Gly-254 participates in NADP(+) binding.

Belongs to the shikimate dehydrogenase family. As to quaternary structure, homodimer.

The enzyme catalyses shikimate + NADP(+) = 3-dehydroshikimate + NADPH + H(+). The protein operates within metabolic intermediate biosynthesis; chorismate biosynthesis; chorismate from D-erythrose 4-phosphate and phosphoenolpyruvate: step 4/7. Its function is as follows. Involved in the biosynthesis of the chorismate, which leads to the biosynthesis of aromatic amino acids. Catalyzes the reversible NADPH linked reduction of 3-dehydroshikimate (DHSA) to yield shikimate (SA). This is Shikimate dehydrogenase (NADP(+)) from Shewanella sp. (strain ANA-3).